The primary structure comprises 60 residues: Toxin C10S2C2 (60 aa).

4 disulfide bridges follow: Cys3–Cys22, Cys17–Cys39, Cys41–Cys52, and Cys53–Cys58. The segment at 41 to 48 (CPTAMWPY) is important for binding to L-type calcium channels.

Belongs to the three-finger toxin family. Short-chain subfamily. L-type calcium blocker sub-subfamily. As to expression, expressed by the venom gland.

It localises to the secreted. This specific blocker of the L-type calcium channel (Cav1/CACNA1) is a smooth muscle relaxant and an inhibitor of cardiac contractions. The chain is Toxin C10S2C2 from Dendroaspis angusticeps (Eastern green mamba).